We begin with the raw amino-acid sequence, 143 residues long: Transcriptional regulator MraZ (143 aa).

2 consecutive SpoVT-AbrB domains span residues 5-47 (TYTP…PREE) and 76-119 (ADEQ…DAAA).

It belongs to the MraZ family. Forms oligomers.

Its subcellular location is the cytoplasm. The protein localises to the nucleoid. The protein is Transcriptional regulator MraZ of Corynebacterium diphtheriae (strain ATCC 700971 / NCTC 13129 / Biotype gravis).